Consider the following 586-residue polypeptide: Ezrin (586 aa).

One can recognise an FERM domain in the interval 2–295 (PKPINVRVTT…GNHELYMRRR (294 aa)). K60 is modified (N6-acetyllysine). The [IL]-x-C-x-x-[DE] motif signature appears at 115 to 120 (IYCPPE). Y146 is subject to Phosphotyrosine; by PDGFR. Positions 244-586 (EIRNISFNDK…KQRIDEFEAM (343 aa)) are interaction with SCYL3. Positions 302–462 (VQQMKAQARE…QDDLVKTKEE (161 aa)) form a coiled coil. The disordered stretch occupies residues 305 to 340 (MKAQAREEKHQKQLERQQLESEKKRREAVEQEKEQM). Positions 308-340 (QAREEKHQKQLERQQLESEKKRREAVEQEKEQM) are enriched in basic and acidic residues. Y354 is modified (phosphotyrosine; by PDGFR). S366 carries the phosphoserine modification. Phosphotyrosine is present on Y478. Position 535 is a phosphoserine (S535). The residue at position 567 (T567) is a Phosphothreonine; by ROCK2 and PKC/PRKCI.

Interacts with PALS1. Found in a complex with EZR, PODXL and NHERF2. Interacts with MCC, PLEKHG6, PODXL, SCYL3/PACE1, NHERF1, NHERF2 and TMEM8B. Interacts (when phosphorylated) with FES/FPS. Interacts with dimeric S100P, the interaction may be activating through unmasking of F-actin binding sites. Identified in complexes that contain VIM, EZR, AHNAK, BFSP1, BFSP2, ANK2, PLEC, PRX and spectrin. Detected in a complex composed of at least EZR, AHNAK, PPL and PRX. Interacts with PDPN (via cytoplasmic domain); activates RHOA and promotes epithelial-mesenchymal transition. Interacts with SPN/CD43 cytoplasmic tail, CD44 and ICAM2. Interacts with SLC9A3; interaction targets SLC9A3 to the apical membrane. Interacts with SLC9A1; regulates interactions of SLC9A1 with cytoskeletal and promotes stress fiber formation. Interacts with CLIC5; may work together in a complex which also includes RDX and MYO6 to stabilize linkages between the plasma membrane and subjacent actin cytoskeleton at the base of stereocilia. In terms of processing, phosphorylated by tyrosine-protein kinases. Phosphorylation by ROCK2 suppresses the head-to-tail association of the N-terminal and C-terminal halves resulting in an opened conformation which is capable of actin and membrane-binding. S-nitrosylation is induced by interferon-gamma and oxidatively-modified low-densitity lipoprotein (LDL(ox)) possibly implicating the iNOS-S100A8/9 transnitrosylase complex.

Its subcellular location is the apical cell membrane. The protein resides in the cell projection. The protein localises to the microvillus membrane. It localises to the ruffle membrane. It is found in the cytoplasm. Its subcellular location is the cell cortex. The protein resides in the cytoskeleton. The protein localises to the microvillus. Its activity is regulated as follows. A head-to-tail association, of the N-terminal and C-terminal halves results in a closed conformation (inactive form) which is incapable of actin or membrane-binding. Its function is as follows. Probably involved in connections of major cytoskeletal structures to the plasma membrane. In epithelial cells, required for the formation of microvilli and membrane ruffles on the apical pole. Along with PLEKHG6, required for normal macropinocytosis. In Oryctolagus cuniculus (Rabbit), this protein is Ezrin (EZR).